A 698-amino-acid polypeptide reads, in one-letter code: Probable Xaa-Pro aminopeptidase P (698 aa).

Mn(2+) contacts are provided by D509, D520, E604, and E618.

Belongs to the peptidase M24B family. Requires Mn(2+) as cofactor.

The catalysed reaction is Release of any N-terminal amino acid, including proline, that is linked to proline, even from a dipeptide or tripeptide.. Functionally, catalyzes the removal of a penultimate prolyl residue from the N-termini of peptides. This chain is Probable Xaa-Pro aminopeptidase P (AMPP), found in Trichophyton verrucosum (strain HKI 0517).